The sequence spans 345 residues: BAG family molecular chaperone regulator 1 (345 aa).

Residues 1–137 are disordered; sequence MAQRGGARRP…STRSEEVTRE (137 aa). Positions 68-80 are enriched in basic residues; it reads RRPRMKKKTRRRS. Residues 81–91 show a composition bias toward basic and acidic residues; sequence TRSEELTRSEE. Over residues 95–114 the composition is skewed to low complexity; sequence SEEATWSEEATQSEEATQGE. 7 repeat units span residues 96 to 101, 102 to 107, 108 to 113, 114 to 119, 120 to 125, 126 to 131, and 132 to 137. Residues 96-137 form a 7 X 6 AA tandem repeat of E-E-X(4) region; sequence EEATWSEEATQSEEATQGEEMNRSQEVTRDEESTRSEEVTRE. The span at 115–137 shows a compositional bias: basic and acidic residues; that stretch reads EMNRSQEVTRDEESTRSEEVTRE. The Ubiquitin-like domain maps to 144 to 224; it reads LTVTVTHSNE…VMLIGKKNSP (81 aa). Residues 172–219 are interaction with HSPA8; it reads DLAQVVEEVIGVPQSFQKLIFKGKSLKEMETPLSALGIQDGCRVMLIG. An interaction with PPP1R15A region spans residues 216 to 345; it reads MLIGKKNSPQ…LQSTNFALAE (130 aa). Ser-223 carries the post-translational modification Phosphoserine. One can recognise a BAG domain in the interval 246-326; it reads QLEELNKELT…AFLAECDTVE (81 aa).

In terms of assembly, homodimer. Forms a heteromeric complex with HSP70/HSC70. Binds to the ATPase domain of HSP/HSC70 chaperones. Isoform 1, isoform 3 and isoform 4 but not isoform 2 interact with HSPA8/HSC70. Interacts with NR3C1. Interacts with the N-terminal region of MAPRE2. Interacts with PPP1R15A. Interacts with BCL2 in an ATP-dependent manner. Isoform 2 does not interact with BCL2. Interacts with SIAH1. Interacts with HSPA8 (via NBD). Interacts with HSPA1A (via NBD) and HSPA1B (via NBD). Interacts with SIAH2. Interacts with ESR1; the interaction is promoted in the absence of estradiol (17-beta-estradiol/E2). In terms of processing, ubiquitinated; mediated by SIAH1 or SIAH2 and leading to its subsequent proteasomal degradation. In terms of tissue distribution, isoform 4 is the most abundantly expressed isoform. It is ubiquitously expressed throughout most tissues, except the liver, colon, breast and uterine myometrium. Isoform 1 is expressed in the ovary and testis. Isoform 4 is expressed in several types of tumor cell lines, and at consistently high levels in leukemia and lymphoma cell lines. Isoform 1 is expressed in the prostate, breast and leukemia cell lines. Isoform 3 is the least abundant isoform in tumor cell lines (at protein level).

It is found in the nucleus. The protein localises to the cytoplasm. In terms of biological role, co-chaperone for HSP70 and HSC70 chaperone proteins. Acts as a nucleotide-exchange factor (NEF) promoting the release of ADP from the HSP70 and HSC70 proteins thereby triggering client/substrate protein release. Nucleotide release is mediated via its binding to the nucleotide-binding domain (NBD) of HSPA8/HSC70 where as the substrate release is mediated via its binding to the substrate-binding domain (SBD) of HSPA8/HSC70. Inhibits the pro-apoptotic function of PPP1R15A, and has anti-apoptotic activity. Markedly increases the anti-cell death function of BCL2 induced by various stimuli. Involved in the STUB1-mediated proteasomal degradation of ESR1 in response to age-related circulating estradiol (17-beta-estradiol/E2) decline, thereby promotes neuronal apoptosis in response to ischemic reperfusion injury. This is BAG family molecular chaperone regulator 1 (BAG1) from Homo sapiens (Human).